Reading from the N-terminus, the 513-residue chain is ATP synthase subunit alpha (513 aa).

An ATP-binding site is contributed by 169-176 (GDRQTGKT).

It belongs to the ATPase alpha/beta chains family. As to quaternary structure, F-type ATPases have 2 components, CF(1) - the catalytic core - and CF(0) - the membrane proton channel. CF(1) has five subunits: alpha(3), beta(3), gamma(1), delta(1), epsilon(1). CF(0) has three main subunits: a(1), b(2) and c(9-12). The alpha and beta chains form an alternating ring which encloses part of the gamma chain. CF(1) is attached to CF(0) by a central stalk formed by the gamma and epsilon chains, while a peripheral stalk is formed by the delta and b chains.

It localises to the cell inner membrane. It carries out the reaction ATP + H2O + 4 H(+)(in) = ADP + phosphate + 5 H(+)(out). In terms of biological role, produces ATP from ADP in the presence of a proton gradient across the membrane. The alpha chain is a regulatory subunit. The polypeptide is ATP synthase subunit alpha (Ralstonia pickettii (strain 12J)).